The sequence spans 166 residues: ATP synthase subunit b (166 aa).

Residues 10 to 30 form a helical membrane-spanning segment; it reads LLFWMVIVFGIVFVILAKYGF.

It belongs to the ATPase B chain family. F-type ATPases have 2 components, F(1) - the catalytic core - and F(0) - the membrane proton channel. F(1) has five subunits: alpha(3), beta(3), gamma(1), delta(1), epsilon(1). F(0) has three main subunits: a(1), b(2) and c(10-14). The alpha and beta chains form an alternating ring which encloses part of the gamma chain. F(1) is attached to F(0) by a central stalk formed by the gamma and epsilon chains, while a peripheral stalk is formed by the delta and b chains.

It localises to the cell inner membrane. In terms of biological role, f(1)F(0) ATP synthase produces ATP from ADP in the presence of a proton or sodium gradient. F-type ATPases consist of two structural domains, F(1) containing the extramembraneous catalytic core and F(0) containing the membrane proton channel, linked together by a central stalk and a peripheral stalk. During catalysis, ATP synthesis in the catalytic domain of F(1) is coupled via a rotary mechanism of the central stalk subunits to proton translocation. Component of the F(0) channel, it forms part of the peripheral stalk, linking F(1) to F(0). The chain is ATP synthase subunit b from Phocaeicola vulgatus (strain ATCC 8482 / DSM 1447 / JCM 5826 / CCUG 4940 / NBRC 14291 / NCTC 11154) (Bacteroides vulgatus).